Consider the following 202-residue polypeptide: Peptide methionine sulfoxide reductase B1, chloroplastic (202 aa).

A chloroplast-targeting transit peptide spans 1-63; that stretch reads MASSTRLTII…SSSPKPDNVQ (63 aa). The tract at residues 48-67 is disordered; it reads YSMGSSSSSPKPDNVQEAEK. The MsrB domain maps to 75-197; it reads ENEWKKRLTP…NSAALKLNAL (123 aa). Positions 114, 117, 163, and 166 each coordinate Zn(2+). Cysteine 186 (nucleophile) is an active-site residue.

The protein belongs to the MsrB Met sulfoxide reductase family. It depends on Zn(2+) as a cofactor. Expressed at low levels in stems, leaves, floral buds, flowers and siliques (at protein level).

It is found in the plastid. The protein resides in the chloroplast. The catalysed reaction is L-methionyl-[protein] + [thioredoxin]-disulfide + H2O = L-methionyl-(R)-S-oxide-[protein] + [thioredoxin]-dithiol. In terms of biological role, catalyzes the reduction of methionine sulfoxide (MetSO) to methionine in proteins. Specifically reduces the MetSO R-enantiomer. Plays a protective role against oxidative stress by restoring activity to proteins that have been inactivated by methionine oxidation. May play an essential function in association with MSRB2 in maintaining vegetative growth during environmental constraints, through the preservation of photosynthetic antennae. MSRB1 and MSRB2 account for most of the leaf peptide MSR capacity. The protein is Peptide methionine sulfoxide reductase B1, chloroplastic of Arabidopsis thaliana (Mouse-ear cress).